The following is a 170-amino-acid chain: Putative pre-16S rRNA nuclease (170 aa).

This sequence belongs to the YqgF nuclease family.

The protein resides in the cytoplasm. Its function is as follows. Could be a nuclease involved in processing of the 5'-end of pre-16S rRNA. This is Putative pre-16S rRNA nuclease from Synechococcus sp. (strain JA-2-3B'a(2-13)) (Cyanobacteria bacterium Yellowstone B-Prime).